A 181-amino-acid polypeptide reads, in one-letter code: Protein GrpE (181 aa).

Belongs to the GrpE family. Homodimer.

The protein localises to the cytoplasm. Participates actively in the response to hyperosmotic and heat shock by preventing the aggregation of stress-denatured proteins, in association with DnaK and GrpE. It is the nucleotide exchange factor for DnaK and may function as a thermosensor. Unfolded proteins bind initially to DnaJ; upon interaction with the DnaJ-bound protein, DnaK hydrolyzes its bound ATP, resulting in the formation of a stable complex. GrpE releases ADP from DnaK; ATP binding to DnaK triggers the release of the substrate protein, thus completing the reaction cycle. Several rounds of ATP-dependent interactions between DnaJ, DnaK and GrpE are required for fully efficient folding. The polypeptide is Protein GrpE (Leptothrix cholodnii (strain ATCC 51168 / LMG 8142 / SP-6) (Leptothrix discophora (strain SP-6))).